Reading from the N-terminus, the 87-residue chain is Large ribosomal subunit protein bL27 (87 aa).

Residues Met1 to Gly22 are disordered.

The protein belongs to the bacterial ribosomal protein bL27 family.

This is Large ribosomal subunit protein bL27 from Akkermansia muciniphila (strain ATCC BAA-835 / DSM 22959 / JCM 33894 / BCRC 81048 / CCUG 64013 / CIP 107961 / Muc).